A 494-amino-acid polypeptide reads, in one-letter code: MTNWQQQLPLTDTQKNELDKSVLRYLNWNYKQTVRHEHAQDYESVRHAIVTLSGFLLQESVDRQEFISNNDTSNESMVDIDELLLPKKWNSIVRLQKKIIELEQNTETLVSQIKDLNTQVSELAQFKPTTSNGASAHNVLKWIPRNLPSCLINVESSVTSVKLHPNLPIVFVATDHGKLYAFDLFNYTIPLASLQSHTKAITSMDVLFTNFTNSSKKNYLVVVTASKDLQIHVFKWVSEECKFQQIRSLLGHEHIVSAVKIWQKNNDVHIASCSRDQTVKIWDFHNGWSLKTFQPHSQWVRSIDVLGDYIISGSHDTTLRLTHWPSGNGLSVGTGHEFPIEKVKFIHFIEDSPEIRFRTPSTDRYKNWGMQYCVSASRDRTIKIWEIPLPTLMAHRAPIPNPTDSNFRCVLTLKGHLSWVRDISIRGQYLFSCADDKSVRCWDLNTGQCLHVWEKLHTGFVNCLDLDVDFDSNVTPRQMMVTGGLDCKSNVFMR.

Residues 14 to 46 (QKNELDKSVLRYLNWNYKQTVRHEHAQDYESVR) form the LisH domain. Positions 90–123 (NSIVRLQKKIIELEQNTETLVSQIKDLNTQVSEL) form a coiled coil. 7 WD repeats span residues 153-192 (NVES…IPLA), 196-244 (SHTK…CKFQ), 251-292 (GHEH…SLKT), 295-334 (PHSQ…SVGT), 347-395 (HFIE…LMAH), 415-454 (GHLS…HVWE), and 457-492 (HTGF…SNVF).

It belongs to the WD repeat LIS1/nudF family. Self-associates. Interacts with NDL1 and dynein.

It localises to the cytoplasm. The protein localises to the cytoskeleton. It is found in the spindle pole. Its function is as follows. Positively regulates the activity of the minus-end directed microtubule motor protein dynein. Plays a central role in positioning the mitotic spindle at the bud neck during cell division. Targets cytoplasmic dynein to microtubule plus ends, thereby promoting dynein-mediated microtubule sliding along the bud cortex and consequently the movement of the mitotic spindle to the bud neck. This chain is Nuclear distribution protein PAC1, found in Saccharomyces cerevisiae (strain RM11-1a) (Baker's yeast).